A 324-amino-acid polypeptide reads, in one-letter code: MGAMIVREVFEIAEKIKNMEIRGAGEIARAVAEALKIQAEKSKAKTSHELWKELKEASKILYNTRPTAVSLPNALRYVMYRGKIAYTSNADLESLRYTIINAAKEFIYNSEKAIERIGEIGAKRIEDGDVIMTHCHSKAAISVMKTAFDQGKDIKVIVTETRPRWQGKITAKELASYGIPVIYIVDGAARHYMKMTDKVVMGADSITANGAVINQIGTALIALTAKEHRVWVMIAAETYKFHPETMLGQLVEIEMRDPTEVVPKEELETWPKNIEVLNPAFDVTPPEYIDVIITEKGVIPPYAAIDILKEEFGWAFKYREPWED.

Substrate is bound by residues 22–25 (RGAG) and Arg65. The active-site Proton acceptor is the Cys135. Residue 137 to 139 (SKA) participates in substrate binding. Asp204 acts as the Proton donor in catalysis. Position 240 (Lys240) interacts with substrate.

This sequence belongs to the eIF-2B alpha/beta/delta subunits family. R15P isomerase subfamily.

It carries out the reaction alpha-D-ribose 1,5-bisphosphate = D-ribulose 1,5-bisphosphate. Its function is as follows. Catalyzes the isomerization of ribose 1,5-bisphosphate (R15P) to ribulose 1,5-bisphosphate (RuBP), the CO(2) acceptor and substrate for RubisCO. Functions in an archaeal AMP degradation pathway, together with AMP phosphorylase and RubisCO. The polypeptide is Ribose 1,5-bisphosphate isomerase (Pyrococcus furiosus (strain ATCC 43587 / DSM 3638 / JCM 8422 / Vc1)).